Consider the following 88-residue polypeptide: Small ribosomal subunit protein bS18 (88 aa).

The disordered stretch occupies residues 1 to 26; the sequence is MAFAQSGGAGGGGGQRRPFFRRRKTC.

This sequence belongs to the bacterial ribosomal protein bS18 family. In terms of assembly, part of the 30S ribosomal subunit. Forms a tight heterodimer with protein bS6.

Its function is as follows. Binds as a heterodimer with protein bS6 to the central domain of the 16S rRNA, where it helps stabilize the platform of the 30S subunit. The chain is Small ribosomal subunit protein bS18 from Xanthobacter autotrophicus (strain ATCC BAA-1158 / Py2).